A 200-amino-acid polypeptide reads, in one-letter code: Holliday junction resolvase RecU (200 aa).

The disordered stretch occupies residues 1–25 (MTIRYPNGKRYNQASQPQKTPIKTH). Positions 10–25 (RYNQASQPQKTPIKTH) are enriched in polar residues. Residues T85, D87, E100, and Q119 each contribute to the Mg(2+) site.

It belongs to the RecU family. Mg(2+) is required as a cofactor.

It is found in the cytoplasm. The enzyme catalyses Endonucleolytic cleavage at a junction such as a reciprocal single-stranded crossover between two homologous DNA duplexes (Holliday junction).. Its function is as follows. Endonuclease that resolves Holliday junction intermediates in genetic recombination. Cleaves mobile four-strand junctions by introducing symmetrical nicks in paired strands. Promotes annealing of linear ssDNA with homologous dsDNA. Required for DNA repair, homologous recombination and chromosome segregation. This is Holliday junction resolvase RecU from Bacillus cereus (strain G9842).